The sequence spans 370 residues: Prolactin-releasing peptide receptor (370 aa).

A disordered region spans residues 1–34 (MTSLPPGTTGDPDLFSGPSPAGSTPANQSAEASE). At 1–62 (MTSLPPGTTG…LQLVHQLKGL (62 aa)) the chain is on the extracellular side. Residues 21–34 (AGSTPANQSAEASE) show a composition bias toward polar residues. N27 and N36 each carry an N-linked (GlcNAc...) asparagine glycan. Residues 63–83 (IVMLYSIVVVVGLVGNCLLVL) form a helical membrane-spanning segment. The Cytoplasmic segment spans residues 84-101 (VIARVRRLHNVTNFLIGN). Residues 102 to 122 (LALSDVLMCAACVPLTLAYAF) form a helical membrane-spanning segment. At 123–126 (EPRG) the chain is on the extracellular side. Residues 127 to 147 (WVFGGGLCHLVFFLQPVTVYV) form a helical membrane-spanning segment. Cysteines 134 and 211 form a disulfide. Residues 148-175 (SVFTLTTIAVDRYVVLVHPLRRRISLKL) lie on the Cytoplasmic side of the membrane. A helical membrane pass occupies residues 176 to 196 (SAYAVLGIWALSAVLALPAAV). Residues 197 to 223 (HTYHVELKPHDVRLCEEFWGSQERQRQ) are Extracellular-facing. Residues 224 to 244 (IYAWGLLLGTYLLPLLAILLS) traverse the membrane as a helical segment. Residues 245–276 (YVRVSVKLRNRVVPGSVTQSQADWDRARRRRT) are Cytoplasmic-facing. A helical transmembrane segment spans residues 277-297 (FCLLVVVVVVFALCWLPLHIF). At 298–317 (NLLRDLDPRAIDPYAFGLVQ) the chain is on the extracellular side. A helical transmembrane segment spans residues 318-338 (LLCHWLAMSSACYNPFIYAWL). Residues 339 to 370 (HDSFREELRKMLLSWPRKIVPHGQNMTVSVVI) lie on the Cytoplasmic side of the membrane. Residues 365-370 (TVSVVI) form a required for interaction with GRIP1, GRIP2 and PICK1 region.

This sequence belongs to the G-protein coupled receptor 1 family. As to quaternary structure, interacts through its C-terminal region with the PDZ domain-containing proteins GRIP1, GRIP2 and PICK1. Interacts with PDZ domains 4 and 5 of GRIP1 and with the PDZ domain of PICK1. As to expression, widely expressed, with highest levels in pituitary, cerebellum, and hypothalamus.

It localises to the cell membrane. Its function is as follows. Receptor for prolactin-releasing peptide (PrRP). Implicated in lactation, regulation of food intake and pain-signal processing. This is Prolactin-releasing peptide receptor (Prlhr) from Rattus norvegicus (Rat).